Here is a 313-residue protein sequence, read N- to C-terminus: Protein FixB (313 aa).

Position 255 to 283 (255 to 283 (LYLAVGISGQIQHMVGANASQTIFAINKD)) interacts with FAD.

This sequence belongs to the ETF alpha-subunit/FixB family. As to quaternary structure, heterodimer of FixA and FixB.

Its pathway is amine and polyamine metabolism; carnitine metabolism. Functionally, required for anaerobic carnitine reduction. May bring reductant to CaiA. The chain is Protein FixB from Escherichia coli (strain K12 / MC4100 / BW2952).